The sequence spans 595 residues: Estrogen receptor (595 aa).

The segment at 1 to 184 (MTMTLHTKAS…AMESAKETRY (184 aa)) is modulating (transactivation AF-1); mediates interaction with MACROD1. O-linked (GlcNAc) serine glycosylation is present at Ser-10. The segment at 35–47 (LERPLGEVYVDGS) is required for interaction with NCOA1. An interaction with DDX5; self-association region spans residues 35 to 174 (LERPLGEVYV…LASTGDKGSM (140 aa)). Phosphoserine; by CDK2 occurs at positions 104 and 106. The residue at position 118 (Ser-118) is a Phosphoserine. The disordered stretch occupies residues 149-173 (FYRPTSDNRRQSGRERLASTGDKGS). A compositionally biased stretch (basic and acidic residues) spans 154 to 165 (SDNRRQSGRERL). Ser-167 carries the post-translational modification Phosphoserine; by CK2. 2 consecutive NR C4-type zinc fingers follow at residues 185–205 (CAVC…CEGC) and 221–245 (CPAT…LRKC). Residues 185–250 (CAVCNDYASG…RLRKCYEVGM (66 aa)) constitute a DNA-binding region (nuclear receptor). Residues 185 to 310 (CAVCNDYASG…TKKNSPALSL (126 aa)) are mediates interaction with DNTTIP2. Positions 251 to 310 (MKGGIRKDRRGGRMLKHKRQRDEGEGRNEVGSSGDVRASNLWPSPLLIKHTKKNSPALSL) are hinge. The segment covering 257–269 (KDRRGGRMLKHKR) has biased composition (basic residues). The tract at residues 257-287 (KDRRGGRMLKHKRQRDEGEGRNEVGSSGDVR) is disordered. Arg-260 carries the asymmetric dimethylarginine; by PRMT1 modification. Positions 262-595 (GRMLKHKRQR…EEAGAFPTTV (334 aa)) are interaction with AKAP13. A self-association region spans residues 264 to 595 (MLKHKRQRDE…EEAGAFPTTV (332 aa)). The region spanning 311 to 547 (TADQMVSALL…DLLLEMLDAH (237 aa)) is the NR LBD domain. Positions 311 to 595 (TADQMVSALL…EEAGAFPTTV (285 aa)) are transactivation AF-2. Glu-353 and Arg-394 together coordinate 17beta-estradiol. Cys-447 is lipidated: S-palmitoyl cysteine. His-524 contributes to the 17beta-estradiol binding site. A Phosphotyrosine; by Tyr-kinases modification is found at Tyr-537. Residue Thr-571 is glycosylated (O-linked (GlcNAc) threonine).

Belongs to the nuclear hormone receptor family. NR3 subfamily. In terms of assembly, binds DNA as a homodimer. Can form a heterodimer with ESR2. Interacts with coactivator NCOA5. Interacts with PELP1, the interaction is enhanced by 17-beta-estradiol; the interaction increases ESR1 transcriptional activity. Interacts with NCOA7; the interaction is ligand-inducible. Interacts with AKAP13, CUEDC2, HEXIM1, KDM5A, MAP1S, SMARD1, and UBE1C. Interacts with MUC1; the interaction is stimulated by 7 beta-estradiol (E2) and enhances ESR1-mediated transcription. Interacts with DNTTIP2, and UIMC1. Interacts with KMT2D/MLL2. Interacts with ATAD2; the interaction is enhanced by estradiol. Interacts with KIF18A and LDB1. Interacts with RLIM (via its C-terminus). Interacts with MACROD1. Interacts with SH2D4A and PLCG. Interacts with SH2D4A; the interaction blocks binding to PLCG and inhibits estrogen-induced cell proliferation. Interacts with DYNLL1. Interacts with CCDC62; the interaction requires estradiol and appears to enhance the transcription of target genes. Interacts with NR2C1; the interaction prevents homodimerization of ESR1 and suppresses its transcriptional activity and cell growth. Interacts with DNAAF4. Interacts with PRMT2. Interacts with RBFOX2. Interacts with EP300; the interaction is estrogen-dependent and enhanced by CITED1. Interacts with CITED1; the interaction is estrogen-dependent. Interacts with FAM120B, FOXL2, PHB2 and SLC30A9. Interacts with coactivators NCOA3 and NCOA6. Interacts with STK3/MST2 only in the presence of SAV1 and vice-versa. Binds to CSNK1D. Interacts with NCOA2; NCOA2 can interact with ESR1 AF-1 and AF-2 domains simultaneously and mediate their transcriptional synergy. Interacts with DDX5. Interacts with NCOA1; the interaction seems to require a self-association of N-terminal and C-terminal regions. Interacts with ZNF366, DDX17, NFKB1, RELA, SP1 and SP3. Interacts with NRIP1. Interacts with GPER1; the interaction occurs in an estrogen-dependent manner. Interacts with CLOCK and the interaction is stimulated by estrogen. Interacts with TRIP4 (ufmylated); estrogen dependent. Interacts with LMTK3; the interaction phosphorylates ESR1 (in vitro) and protects it against proteasomal degradation. Interacts with CCAR2 (via N-terminus) in a ligand-independent manner. Interacts with ZFHX3. Interacts with SFR1 in a ligand-dependent and -independent manner. Interacts with DCAF13, LATS1 and DCAF1; regulates ESR1 ubiquitination and ubiquitin-mediated proteasomal degradation. Interacts (via DNA-binding domain) with POU4F2 (C-terminus); this interaction increases the estrogen receptor ESR1 transcriptional activity in a DNA- and ligand 17-beta-estradiol-independent manner. Interacts with ESRRB isoform 1. Interacts with UBE3A and WBP2. Interacts with GTF2B. Interacts with RBM39. In the absence of hormonal ligand, interacts with TACC1. Interacts with PI3KR1 or PI3KR2 and PTK2/FAK1. Interacts with SRC. Interacts with BAG1; the interaction is promoted in the absence of estradiol (17-beta-estradiol/E2). Interacts with and ubiquitinated by STUB1; the interaction is promoted in the absence of estradiol (17-beta-estradiol/E2). Interacts with NEDD8. Post-translationally, ubiquitinated; regulated by LATS1 via DCAF1 it leads to ESR1 proteasomal degradation. Deubiquitinated by OTUB1. Ubiquitinated by STUB1/CHIP; in the CA1 hippocampal region following loss of endogenous circulating estradiol (17-beta-estradiol/E2). Ubiquitinated by UBR5, leading to its degradation: UBR5 specifically recognizes and binds ligand-bound ESR1 when it is not associated with coactivators (NCOAs). In presence of NCOAs, the UBR5-degron is not accessible, preventing its ubiquitination and degradation. In terms of processing, phosphorylated by cyclin A/CDK2 and CK1. Phosphorylation probably enhances transcriptional activity. Dephosphorylation at Ser-118 by PPP5C inhibits its transactivation activity. Phosphorylated by LMTK3 (in vitro). Palmitoylated at Cys-447 by ZDHHC7 and ZDHHC21. Palmitoylation is required for plasma membrane targeting and for rapid intracellular signaling via ERK and AKT kinases and cAMP generation, but not for signaling mediated by the nuclear hormone receptor. Post-translationally, dimethylated by PRMT1 at Arg-260. The methylation may favor cytoplasmic localization. Demethylated by JMJD6 at Arg-260.

It is found in the nucleus. The protein localises to the cytoplasm. Its subcellular location is the golgi apparatus. It localises to the cell membrane. In terms of biological role, nuclear hormone receptor. The steroid hormones and their receptors are involved in the regulation of eukaryotic gene expression and affect cellular proliferation and differentiation in target tissues. Ligand-dependent nuclear transactivation involves either direct homodimer binding to a palindromic estrogen response element (ERE) sequence or association with other DNA-binding transcription factors, such as AP-1/c-Jun, c-Fos, ATF-2, Sp1 and Sp3, to mediate ERE-independent signaling. Ligand binding induces a conformational change allowing subsequent or combinatorial association with multiprotein coactivator complexes through LXXLL motifs of their respective components. Mutual transrepression occurs between the estrogen receptor (ER) and NF-kappa-B in a cell-type specific manner. Decreases NF-kappa-B DNA-binding activity and inhibits NF-kappa-B-mediated transcription from the IL6 promoter and displace RELA/p65 and associated coregulators from the promoter. Recruited to the NF-kappa-B response element of the CCL2 and IL8 promoters and can displace CREBBP. Present with NF-kappa-B components RELA/p65 and NFKB1/p50 on ERE sequences. Can also act synergistically with NF-kappa-B to activate transcription involving respective recruitment adjacent response elements; the function involves CREBBP. Can activate the transcriptional activity of TFF1. Also mediates membrane-initiated estrogen signaling involving various kinase cascades. Essential for MTA1-mediated transcriptional regulation of BRCA1 and BCAS3. Maintains neuronal survival in response to ischemic reperfusion injury when in the presence of circulating estradiol (17-beta-estradiol/E2). This chain is Estrogen receptor (ESR1), found in Felis catus (Cat).